A 333-amino-acid polypeptide reads, in one-letter code: Flap endonuclease 1 (333 aa).

The N-domain stretch occupies residues 1-99 (MGVAIRDILA…ETINERREHR (99 aa)). D28, D81, E153, E155, D174, D176, and D235 together coordinate Mg(2+). The tract at residues 117 to 255 (EAYKQASASA…KTALKIVRNG (139 aa)) is I-domain. Residues 325–333 (TQKTLDAWF) form an interaction with PCNA region.

The protein belongs to the XPG/RAD2 endonuclease family. FEN1 subfamily. In terms of assembly, interacts with PCNA. PCNA stimulates the nuclease activity without altering cleavage specificity. The cofactor is Mg(2+).

Structure-specific nuclease with 5'-flap endonuclease and 5'-3' exonuclease activities involved in DNA replication and repair. During DNA replication, cleaves the 5'-overhanging flap structure that is generated by displacement synthesis when DNA polymerase encounters the 5'-end of a downstream Okazaki fragment. Binds the unpaired 3'-DNA end and kinks the DNA to facilitate 5' cleavage specificity. Cleaves one nucleotide into the double-stranded DNA from the junction in flap DNA, leaving a nick for ligation. Also involved in the base excision repair (BER) pathway. Acts as a genome stabilization factor that prevents flaps from equilibrating into structures that lead to duplications and deletions. Also possesses 5'-3' exonuclease activity on nicked or gapped double-stranded DNA. This chain is Flap endonuclease 1, found in Methanoculleus marisnigri (strain ATCC 35101 / DSM 1498 / JR1).